Reading from the N-terminus, the 486-residue chain is Probable transporter MCH1 (486 aa).

The next 6 membrane-spanning stretches (helical) occupy residues 31 to 51 (ISFF…LFSL), 69 to 89 (FIAS…GYLA), 91 to 111 (CYGP…SYFV), 132 to 152 (FGIC…SSLL), 164 to 184 (LAIS…SQLM), and 204 to 224 (FFGV…SVVS). Residues 236–260 (EMEEADEESPLMTSRSRHSHHSCED) are disordered. The chain crosses the membrane as a helical span at residues 280 to 300 (FINFLKDKSAWLLLASLILNI). Asn-322 is a glycosylation site (N-linked (GlcNAc...) asparagine). 2 helical membrane-spanning segments follow: residues 327 to 348 (VSIM…SDYL) and 357 to 377 (ICRV…QFMV). N-linked (GlcNAc...) asparagine glycosylation is present at Asn-390. A run of 2 helical transmembrane segments spans residues 395–415 (GGLF…DMMG) and 417–437 (TWGS…IFYG). Asn-457 carries N-linked (GlcNAc...) asparagine glycosylation. Residues 458–478 (LTAVGLSVSLILIIIVWKGIW) form a helical membrane-spanning segment.

Belongs to the major facilitator superfamily.

The protein localises to the vacuole membrane. In terms of biological role, probable transporter. The sequence is that of Probable transporter MCH1 (MCH1) from Debaryomyces hansenii (strain ATCC 36239 / CBS 767 / BCRC 21394 / JCM 1990 / NBRC 0083 / IGC 2968) (Yeast).